Here is a 148-residue protein sequence, read N- to C-terminus: Transcription antitermination protein NusB (148 aa).

It belongs to the NusB family.

Involved in transcription antitermination. Required for transcription of ribosomal RNA (rRNA) genes. Binds specifically to the boxA antiterminator sequence of the ribosomal RNA (rrn) operons. This is Transcription antitermination protein NusB from Aquifex aeolicus (strain VF5).